A 273-amino-acid chain; its full sequence is Glucosamine-6-phosphate deaminase (273 aa).

Asp72 functions as the Proton acceptor; for enolization step in the catalytic mechanism. Asp141 (for ring-opening step) is an active-site residue. His143 acts as the Proton acceptor; for ring-opening step in catalysis. Catalysis depends on Glu148, which acts as the For ring-opening step.

This sequence belongs to the glucosamine/galactosamine-6-phosphate isomerase family. As to quaternary structure, homohexamer.

The protein resides in the cytoplasm. The catalysed reaction is alpha-D-glucosamine 6-phosphate + H2O = beta-D-fructose 6-phosphate + NH4(+). Its pathway is nucleotide-sugar biosynthesis; UDP-N-acetyl-alpha-D-glucosamine biosynthesis; alpha-D-glucosamine 6-phosphate from D-fructose 6-phosphate: step 1/1. Its function is as follows. Catalyzes the reversible conversion of alpha-D-glucosamine 6-phosphate (GlcN-6P) into beta-D-fructose 6-phosphate (Fru-6P) and ammonium ion, a regulatory reaction step in de novo uridine diphosphate-N-acetyl-alpha-D-glucosamine (UDP-GlcNAc) biosynthesis via hexosamine pathway. This is Glucosamine-6-phosphate deaminase from Drosophila melanogaster (Fruit fly).